The chain runs to 80 residues: Putative membrane protein insertion efficiency factor (80 aa).

The protein belongs to the UPF0161 family.

The protein localises to the cell inner membrane. Functionally, could be involved in insertion of integral membrane proteins into the membrane. This chain is Putative membrane protein insertion efficiency factor, found in Syntrophobacter fumaroxidans (strain DSM 10017 / MPOB).